We begin with the raw amino-acid sequence, 131 residues long: Holo-[acyl-carrier-protein] synthase (131 aa).

Asp8 and Glu59 together coordinate Mg(2+).

The protein belongs to the P-Pant transferase superfamily. AcpS family. Mg(2+) is required as a cofactor.

It is found in the cytoplasm. It catalyses the reaction apo-[ACP] + CoA = holo-[ACP] + adenosine 3',5'-bisphosphate + H(+). Functionally, transfers the 4'-phosphopantetheine moiety from coenzyme A to a Ser of acyl-carrier-protein. This chain is Holo-[acyl-carrier-protein] synthase, found in Paramagnetospirillum magneticum (strain ATCC 700264 / AMB-1) (Magnetospirillum magneticum).